Here is a 257-residue protein sequence, read N- to C-terminus: Type III pantothenate kinase (257 aa).

ATP is bound at residue 6 to 13 (DVGNTNTV). Substrate contacts are provided by residues Y102 and 109–112 (GADR). D111 serves as the catalytic Proton acceptor. A K(+)-binding site is contributed by D131. ATP is bound at residue T134. T186 serves as a coordination point for substrate.

Belongs to the type III pantothenate kinase family. Homodimer. It depends on NH4(+) as a cofactor. The cofactor is K(+).

The protein localises to the cytoplasm. It carries out the reaction (R)-pantothenate + ATP = (R)-4'-phosphopantothenate + ADP + H(+). It functions in the pathway cofactor biosynthesis; coenzyme A biosynthesis; CoA from (R)-pantothenate: step 1/5. Catalyzes the phosphorylation of pantothenate (Pan), the first step in CoA biosynthesis. This is Type III pantothenate kinase from Leptospira borgpetersenii serovar Hardjo-bovis (strain JB197).